The following is a 252-amino-acid chain: Carboxy-S-adenosyl-L-methionine synthase (252 aa).

Residues Y45, 70–72 (GCS), 95–96 (DN), 127–128 (DI), N142, and R209 each bind S-adenosyl-L-methionine.

This sequence belongs to the class I-like SAM-binding methyltransferase superfamily. Cx-SAM synthase family. Homodimer.

The enzyme catalyses prephenate + S-adenosyl-L-methionine = carboxy-S-adenosyl-L-methionine + 3-phenylpyruvate + H2O. Catalyzes the conversion of S-adenosyl-L-methionine (SAM) to carboxy-S-adenosyl-L-methionine (Cx-SAM). This is Carboxy-S-adenosyl-L-methionine synthase from Pseudomonas paraeruginosa (strain DSM 24068 / PA7) (Pseudomonas aeruginosa (strain PA7)).